The primary structure comprises 323 residues: tRNA U34 carboxymethyltransferase (323 aa).

Carboxy-S-adenosyl-L-methionine is bound by residues Lys91, Trp105, Lys110, Gly130, 152-154, 181-182, Met196, Tyr200, and Arg315; these read DPT and IE.

It belongs to the class I-like SAM-binding methyltransferase superfamily. CmoB family. As to quaternary structure, homotetramer.

The enzyme catalyses carboxy-S-adenosyl-L-methionine + 5-hydroxyuridine(34) in tRNA = 5-carboxymethoxyuridine(34) in tRNA + S-adenosyl-L-homocysteine + H(+). Its function is as follows. Catalyzes carboxymethyl transfer from carboxy-S-adenosyl-L-methionine (Cx-SAM) to 5-hydroxyuridine (ho5U) to form 5-carboxymethoxyuridine (cmo5U) at position 34 in tRNAs. The polypeptide is tRNA U34 carboxymethyltransferase (Escherichia coli (strain K12 / MC4100 / BW2952)).